Consider the following 149-residue polypeptide: Calmodulin (149 aa).

A2 carries the N-acetylalanine modification. 4 consecutive EF-hand domains span residues E8 to N43, P44 to D79, D81 to K116, and L117 to K149. Residues D21, D23, D25, C27, E32, D57, D59, N61, T63, E68, D94, D96, N98, and E105 each coordinate Ca(2+). K116 bears the N6,N6,N6-trimethyllysine mark. Positions 130, 132, 134, 136, and 141 each coordinate Ca(2+).

It belongs to the calmodulin family. In terms of processing, the N-terminus is blocked.

Functionally, calmodulin mediates the control of a large number of enzymes, ion channels and other proteins by Ca(2+). Among the enzymes to be stimulated by the calmodulin-Ca(2+) complex are a number of protein kinases and phosphatases. This chain is Calmodulin, found in Spinacia oleracea (Spinach).